Here is a 110-residue protein sequence, read N- to C-terminus: Large ribosomal subunit protein uL22 (110 aa).

This sequence belongs to the universal ribosomal protein uL22 family. Part of the 50S ribosomal subunit.

Its function is as follows. This protein binds specifically to 23S rRNA; its binding is stimulated by other ribosomal proteins, e.g. L4, L17, and L20. It is important during the early stages of 50S assembly. It makes multiple contacts with different domains of the 23S rRNA in the assembled 50S subunit and ribosome. In terms of biological role, the globular domain of the protein is located near the polypeptide exit tunnel on the outside of the subunit, while an extended beta-hairpin is found that lines the wall of the exit tunnel in the center of the 70S ribosome. This is Large ribosomal subunit protein uL22 from Hahella chejuensis (strain KCTC 2396).